Consider the following 695-residue polypeptide: U1 snRNP-associated protein usp107 (695 aa).

Over residues 85–96 the composition is skewed to basic and acidic residues; the sequence is RDNESQQKDRKN. Positions 85 to 134 are disordered; the sequence is RDNESQQKDRKNLPRNQKSNEIQEKQTFQTPSSEKSTTERESRPFVPPNS. The segment covering 98 to 113 has biased composition (polar residues); the sequence is PRNQKSNEIQEKQTFQ. The 83-residue stretch at 139-221 folds into the RRM domain; sequence RMLFIGNIPK…PSTRLSLITD (83 aa). Positions 265–369 form a coiled coil; it reads DVRSRIERAA…NLLSKHRISR (105 aa). 2 stretches are compositionally biased toward basic and acidic residues: residues 487–506 and 548–561; these read EEDA…RTRG and SERR…RLLL. Disordered stretches follow at residues 487-509 and 540-590; these read EEDA…GEGA and QTKK…AEKT. Residues 605-695 enclose the PWI domain; the sequence is ESLWALPIDW…HVLLILRSEA (91 aa).

As to quaternary structure, component of the U1 snRNP particle, a subcomplex of the spliceosome. Interacts with prp5 and usp102.

The protein localises to the cytoplasm. It localises to the nucleus. Functionally, component of the U1 snRNP particle, which recognizes and binds the 5'-splice site of pre-mRNA. Together with other non-snRNP factors, U1 snRNP forms the spliceosomal commitment complex, that targets pre-mRNA to the splicing pathway. The protein is U1 snRNP-associated protein usp107 (usp107) of Schizosaccharomyces pombe (strain 972 / ATCC 24843) (Fission yeast).